The following is a 653-amino-acid chain: Serine/threonine-protein phosphatase with EF-hands 1 (653 aa).

The IQ domain occupies 16 to 45; the sequence is SLRAALIIQNWYRGYKARLKARQHYALTIF. The tract at residues 121–455 is catalytic; the sequence is IDLLLEAFKE…PRFFQYQVTK (335 aa). Mn(2+)-binding residues include D172, H174, D201, and N233. The active-site Proton donor is H234. Mn(2+) is bound by residues H285 and H403. EF-hand domains follow at residues 483–518, 566–601, and 606–641; these read SRKS…ILGL, RYRS…FSSH, and IDDS…VHRY. Residues D579, D581, S583, E590, D619, N621, D623, S625, and E630 each contribute to the Ca(2+) site.

The protein belongs to the PPP phosphatase family. The cofactor is Mn(2+). It depends on Mg(2+) as a cofactor. In terms of tissue distribution, detected in retina and retinal derived Y-79 retinoblastoma cells. Also found in fetal brain.

It catalyses the reaction O-phospho-L-seryl-[protein] + H2O = L-seryl-[protein] + phosphate. The enzyme catalyses O-phospho-L-threonyl-[protein] + H2O = L-threonyl-[protein] + phosphate. Its activity is regulated as follows. Activated by calcium. In terms of biological role, may have a role in the recovery or adaptation response of photoreceptors. May have a role in development. The polypeptide is Serine/threonine-protein phosphatase with EF-hands 1 (PPEF1) (Homo sapiens (Human)).